Reading from the N-terminus, the 291-residue chain is ATP synthase gamma chain (291 aa).

This sequence belongs to the ATPase gamma chain family. As to quaternary structure, F-type ATPases have 2 components, CF(1) - the catalytic core - and CF(0) - the membrane proton channel. CF(1) has five subunits: alpha(3), beta(3), gamma(1), delta(1), epsilon(1). CF(0) has three main subunits: a, b and c.

It is found in the cell inner membrane. In terms of biological role, produces ATP from ADP in the presence of a proton gradient across the membrane. The gamma chain is believed to be important in regulating ATPase activity and the flow of protons through the CF(0) complex. The chain is ATP synthase gamma chain from Pelagibacter ubique (strain HTCC1062).